Consider the following 434-residue polypeptide: GTPase Obg (434 aa).

Positions 1–158 constitute an Obg domain; sequence MFIDRAKIYV…RWLYLELKLL (158 aa). Residues 159–328 form the OBG-type G domain; the sequence is ADVGLLGLPN…LLELMEKYVK (170 aa). Residues 165-172, 190-194, 211-214, 280-283, and 309-311 contribute to the GTP site; these read GLPNAGKS, FTTKT, DIPG, NKID, and SAK. 2 residues coordinate Mg(2+): Ser-172 and Thr-192. The 79-residue stretch at 347–425 folds into the OCT domain; that stretch reads KQENKKQEIP…IGNYVFKYNS (79 aa).

This sequence belongs to the TRAFAC class OBG-HflX-like GTPase superfamily. OBG GTPase family. In terms of assembly, monomer. Mg(2+) is required as a cofactor.

It localises to the cytoplasm. Its function is as follows. An essential GTPase which binds GTP, GDP and possibly (p)ppGpp with moderate affinity, with high nucleotide exchange rates and a fairly low GTP hydrolysis rate. Plays a role in control of the cell cycle, stress response, ribosome biogenesis and in those bacteria that undergo differentiation, in morphogenesis control. This Dictyoglomus turgidum (strain DSM 6724 / Z-1310) protein is GTPase Obg.